The sequence spans 341 residues: Uroporphyrinogen decarboxylase (341 aa).

Substrate contacts are provided by residues 23 to 27 (RQAGR), Phe-42, Asp-73, Tyr-148, Ser-203, and His-318.

The protein belongs to the uroporphyrinogen decarboxylase family. As to quaternary structure, homodimer.

It localises to the cytoplasm. The catalysed reaction is uroporphyrinogen III + 4 H(+) = coproporphyrinogen III + 4 CO2. It functions in the pathway porphyrin-containing compound metabolism; protoporphyrin-IX biosynthesis; coproporphyrinogen-III from 5-aminolevulinate: step 4/4. Functionally, catalyzes the decarboxylation of four acetate groups of uroporphyrinogen-III to yield coproporphyrinogen-III. The chain is Uroporphyrinogen decarboxylase from Brucella melitensis biotype 1 (strain ATCC 23456 / CCUG 17765 / NCTC 10094 / 16M).